The following is a 117-amino-acid chain: Ribosome-binding factor A (117 aa).

The protein belongs to the RbfA family. In terms of assembly, monomer. Binds 30S ribosomal subunits, but not 50S ribosomal subunits or 70S ribosomes.

It is found in the cytoplasm. One of several proteins that assist in the late maturation steps of the functional core of the 30S ribosomal subunit. Associates with free 30S ribosomal subunits (but not with 30S subunits that are part of 70S ribosomes or polysomes). Required for efficient processing of 16S rRNA. May interact with the 5'-terminal helix region of 16S rRNA. In Petrotoga mobilis (strain DSM 10674 / SJ95), this protein is Ribosome-binding factor A.